Here is a 456-residue protein sequence, read N- to C-terminus: Anthocyanidin 3-O-glucosyltransferase UFGT (456 aa).

Position 18 (Ser-18) interacts with kaempferol. Residue Ser-18 coordinates quercetin. Thr-19 provides a ligand contact to UDP. Thr-19 is a UDP-alpha-D-glucose binding site. 2 residues coordinate kaempferol: His-20 and Gln-84. The active-site Proton acceptor is the His-20. Gln-84 is a binding site for quercetin. Residue Asp-119 is the Charge relay of the active site. Thr-141 is a UDP-alpha-D-glucose binding site. Kaempferol contacts are provided by His-150 and Gln-188. 2 residues coordinate quercetin: His-150 and Gln-188. 5 residues coordinate UDP: Thr-280, Ser-306, Trp-332, Ala-333, and His-350. Thr-280, Ser-306, Trp-332, Ala-333, His-350, Trp-353, Asn-354, Ser-355, and Glu-358 together coordinate UDP-alpha-D-glucose. 3 residues coordinate UDP: Asn-354, Ser-355, and Glu-358. Gly-373 serves as a coordination point for quercetin. UDP-alpha-D-glucose-binding residues include Asp-374 and Gln-375.

Belongs to the UDP-glycosyltransferase family. In terms of tissue distribution, detected only in berry skin.

The catalysed reaction is an anthocyanidin + UDP-alpha-D-glucose + H(+) = an anthocyanidin 3-O-beta-D-glucoside + UDP. It catalyses the reaction cyanidin + UDP-alpha-D-glucose = cyanidin 3-O-beta-D-glucoside + UDP + H(+). The enzyme catalyses delphinidin + UDP-alpha-D-glucose = delphinidin 3-O-beta-D-glucoside + UDP. It carries out the reaction peonidin + UDP-alpha-D-glucose = peonidin 3-O-beta-D-glucoside + UDP. The catalysed reaction is pelargonidin + UDP-alpha-D-glucose = pelargonidin 3-O-beta-D-glucoside + UDP. It catalyses the reaction malvidin + UDP-alpha-D-glucose = malvidin 3-O-beta-D-glucoside + UDP. The enzyme catalyses a flavonol + UDP-alpha-D-glucose = a flavonol 3-O-beta-D-glucoside + UDP + H(+). It functions in the pathway pigment biosynthesis; anthocyanin biosynthesis. Its activity is regulated as follows. Inhibited by Mn(2+) and Zn(2+). Its function is as follows. In the presence of other necessary color factors, this glycosylation reaction allows the accumulation of anthocyanin pigments. Involved in the formation of red wine pigments. UDP-glucose (UDP-Glc) is the physiological sugar donor, and cyanidin is the natural acceptor in vivo. Can glucosylate the anthocyanidins delphinidin, peonidin, pelargonidin and malvidin. The flavonols quercitin and kaempferol can also be glucosylated in vitro, but with glucosylation rates 50-100 times lower than cyanidin. In vitro, can use UDP-Glc, UDP-5SGlc, UDP-Xyl, UDP-Man, UDP-Gal, UDP-GlcNAc, GDP-Glc, dTDP-Glc and dTDP-Xyl as sugar donors, but not UDP-6OMeGal, UDP-Ara, UDP-6FGal, UDP-GlcN, UDP-2FGal, UDP-5SAra, GDP-Man, GDP-Fuc, UDP-Fuc or UDP-Rha. In Vitis vinifera (Grape), this protein is Anthocyanidin 3-O-glucosyltransferase UFGT.